A 58-amino-acid polypeptide reads, in one-letter code: Conotoxin Leo-T2 (58 aa).

A signal peptide spans 1–22 (MRCLPVFIILPLLIPSAPSVDA). Residues 23–47 (QPMTEDDVPLASFHEQTLQELWNKR) constitute a propeptide that is removed on maturation.

It belongs to the conotoxin T superfamily. Contains 2 disulfide bonds that can be either 'C1-C3, C2-C4' or 'C1-C4, C2-C3', since these disulfide connectivities have been observed for conotoxins with cysteine framework V (for examples, see AC P0DQQ7 and AC P81755). As to expression, expressed by the venom duct.

The protein localises to the secreted. The polypeptide is Conotoxin Leo-T2 (Conus leopardus (Leopard cone)).